Consider the following 313-residue polypeptide: Ribosomal RNA small subunit methyltransferase H (313 aa).

S-adenosyl-L-methionine contacts are provided by residues 35–37 (GGH), D55, F80, D102, and Q109.

It belongs to the methyltransferase superfamily. RsmH family.

The protein localises to the cytoplasm. The enzyme catalyses cytidine(1402) in 16S rRNA + S-adenosyl-L-methionine = N(4)-methylcytidine(1402) in 16S rRNA + S-adenosyl-L-homocysteine + H(+). Functionally, specifically methylates the N4 position of cytidine in position 1402 (C1402) of 16S rRNA. The sequence is that of Ribosomal RNA small subunit methyltransferase H from Shewanella putrefaciens (strain CN-32 / ATCC BAA-453).